The primary structure comprises 415 residues: Adipocyte plasma membrane-associated protein (415 aa).

A disordered region spans residues 1–29; sequence MSEADGLRQRRPLRPQVVTDDGQVPEVKE. Residue S2 is modified to N-acetylserine. Topologically, residues 2–39 are cytoplasmic; it reads SEADGLRQRRPLRPQVVTDDGQVPEVKEGSSFSGRVFR. T19 is subject to Phosphothreonine. Residues 40 to 60 form a helical; Signal-anchor for type II membrane protein membrane-spanning segment; that stretch reads MTFLMLAVSLAIPLLGAMMLL. Residues 61–415 are Extracellular-facing; the sequence is ESPIDPQSFS…FICRLSLQSI (355 aa). The N-linked (GlcNAc...) asparagine glycan is linked to N159.

The protein belongs to the strictosidine synthase family. In terms of processing, glycosylated in vitro. As to expression, strongly expressed in adipose tissue. Highly expressed in liver, heart, and kidney. Expressed at intermediate level in brain and lung. Weakly expressed in spleen, skeletal muscle and testis.

The protein localises to the membrane. Exhibits strong arylesterase activity with beta-naphthyl acetate and phenyl acetate. May play a role in adipocyte differentiation. The protein is Adipocyte plasma membrane-associated protein (Apmap) of Mus musculus (Mouse).